The chain runs to 40 residues: Photosystem II reaction center protein X (40 aa).

A helical membrane pass occupies residues 10–30 (FFYSILFGAIVLGLLGGGFIF).

Belongs to the PsbX family. Type 1 subfamily. In terms of assembly, PSII is composed of 1 copy each of membrane proteins PsbA, PsbB, PsbC, PsbD, PsbE, PsbF, PsbH, PsbI, PsbJ, PsbK, PsbL, PsbM, PsbT, PsbX, PsbY, PsbZ, Psb30/Ycf12, peripheral proteins PsbO, CyanoQ (PsbQ), PsbU, PsbV and a large number of cofactors. It forms dimeric complexes.

The protein localises to the cellular thylakoid membrane. Its function is as follows. Involved in the binding and/or turnover of quinones at the Q(B) site of photosystem II (PSII). PSII is a light-driven water plastoquinone oxidoreductase, using light energy to abstract electrons from H(2)O, generating a proton gradient subsequently used for ATP formation. The polypeptide is Photosystem II reaction center protein X (Acaryochloris marina (strain MBIC 11017)).